Reading from the N-terminus, the 916-residue chain is MNYKDTLLMPKTDFPMRGGLPNKEPQIQEQWEANNQYQKALEKNKGNQSYILHDGPPYANGNLHMGHALNKIIKDIIVRYKTMQGFYAPYVPGWDTHGLPIEQALTKKGVDRKKMSIAEFREKCKEFALEQIELQKKDFKRLGVRGDFNDPYITLKPEYEAAQIRLFGEMADKGLIYKGKKPVYWSPSSESSLAEAEIEYHDKRSASIYVAFDVKDTKGVVDQDAQFIIWTTTPWTIPSNVAITVHPDLKYGQYNVNGKKYIIAQALSEDVAEALEWDKDAIQLEKEFTGKELEYVEAQHPFLDRISLVINGNHVTTDAGTGCVHTAPGHGEDDYIVGQKYDLPVISPLDDKGVFTEEGGQFEGMFYDKANKAVTDLLTEKDALLKLNFITHSYPHDWRTKKPVIFRATPQWFASINKVRQDILDAIEETDFKVDWGKTRIYNMIRDRGEWVISRQRVWGVPLPVFYAENGDIIMTKETVNHVADLFEEHGSNIWFEREAKDLLPEGFTHPGSPNGTFTKEMDIMDVWFDSGSSHRGVLENRPELSFPADLYFEGSDQYRGWFNSSITTAVATRGQAPYKFLLSHGFVMDGEGKKMSKSLGNVIVPDQVVKQKGADIARLWVSSTDYLADVRISDEILKQTSDVYRKIRNTLRFMLGNINDFNPDTDVIPEAELLEVDRYLLNRLREFTASTIEHYDNFDYLNIYQEVQNFINVELSNFYLDYGKDILYIEEKNAHKRRSMQTVLYQILVDMTKLLAPILVHTAEEVWTHTPHVKEESVHLADMPKVVEVDQALLDKWNQFMALRDDVNRALEVARNNKVIGKSLEAKVVIGNNDNFKAAEFLQQFEDLQQLFIVSQVEVSDSVDNAEAYQHGDIRIDHAVGEKCERCWNYTEELGSVGELEHLCPRCQEVVKTLV.

The short motif at Pro-57–His-67 is the 'HIGH' region element. Glu-554 provides a ligand contact to L-isoleucyl-5'-AMP. The short motif at Lys-595 to Ser-599 is the 'KMSKS' region element. ATP is bound at residue Lys-598. Cys-885, Cys-888, Cys-905, and Cys-908 together coordinate Zn(2+).

This sequence belongs to the class-I aminoacyl-tRNA synthetase family. IleS type 1 subfamily. In terms of assembly, monomer. Requires Zn(2+) as cofactor.

The protein resides in the cytoplasm. It catalyses the reaction tRNA(Ile) + L-isoleucine + ATP = L-isoleucyl-tRNA(Ile) + AMP + diphosphate. Its function is as follows. Catalyzes the attachment of isoleucine to tRNA(Ile). As IleRS can inadvertently accommodate and process structurally similar amino acids such as valine, to avoid such errors it has two additional distinct tRNA(Ile)-dependent editing activities. One activity is designated as 'pretransfer' editing and involves the hydrolysis of activated Val-AMP. The other activity is designated 'posttransfer' editing and involves deacylation of mischarged Val-tRNA(Ile). In Staphylococcus haemolyticus (strain JCSC1435), this protein is Isoleucine--tRNA ligase.